The chain runs to 161 residues: UPF0178 protein BR1979/BS1330_I1973 (161 aa).

The protein belongs to the UPF0178 family.

The chain is UPF0178 protein BR1979/BS1330_I1973 from Brucella suis biovar 1 (strain 1330).